The sequence spans 130 residues: Small ribosomal subunit protein uS8 (130 aa).

The protein belongs to the universal ribosomal protein uS8 family. Part of the 30S ribosomal subunit.

Functionally, one of the primary rRNA binding proteins, it binds directly to 16S rRNA central domain where it helps coordinate assembly of the platform of the 30S subunit. The sequence is that of Small ribosomal subunit protein uS8 from Thermococcus kodakarensis (strain ATCC BAA-918 / JCM 12380 / KOD1) (Pyrococcus kodakaraensis (strain KOD1)).